The primary structure comprises 219 residues: MHIHLFRCQCMIETIHIKNFRGIRELKLENLGQINIIAGKNNASKSSILEALALFLSAKEGFSLFIKILREILLWRGWYGEKSIYDLFYKNSKELEVSVKFLNQDFANLTLKNSNQSFANKNIAVELKSDKNSWSGRFDSHLIHPDYISSILTSAEATQSNFEFITSLTLIKFGYIESIYSQAYETQVLQDAIRLLREAYPEVKSLSPLQKYNKWIIHV.

This is an uncharacterized protein from Methanocaldococcus jannaschii (strain ATCC 43067 / DSM 2661 / JAL-1 / JCM 10045 / NBRC 100440) (Methanococcus jannaschii).